The following is a 68-amino-acid chain: Large ribosomal subunit protein bL35 (68 aa).

This sequence belongs to the bacterial ribosomal protein bL35 family.

This is Large ribosomal subunit protein bL35 from Persephonella marina (strain DSM 14350 / EX-H1).